Reading from the N-terminus, the 534-residue chain is CTP synthase (534 aa).

An amidoligase domain region spans residues 1–267 (MTKYIFVTGG…DQIVCDHLKL (267 aa)). Serine 13 provides a ligand contact to CTP. Serine 13 contacts UTP. 14 to 19 (SIGKGI) is an ATP binding site. An L-glutamine-binding site is contributed by tyrosine 54. Residue aspartate 71 coordinates ATP. Mg(2+) contacts are provided by aspartate 71 and glutamate 141. CTP-binding positions include 148-150 (DIE), 188-193 (KTKPTQ), and lysine 224. Residues 188 to 193 (KTKPTQ) and lysine 224 each bind UTP. 240–242 (RNV) contributes to the ATP binding site. The 243-residue stretch at 292 to 534 (KIALVGKYVE…FVTAAIKNSN (243 aa)) folds into the Glutamine amidotransferase type-1 domain. Glycine 354 contacts L-glutamine. The active-site Nucleophile; for glutamine hydrolysis is cysteine 381. Residues 382 to 385 (LGMQ), glutamate 405, and arginine 463 contribute to the L-glutamine site. Active-site residues include histidine 508 and glutamate 510.

It belongs to the CTP synthase family. As to quaternary structure, homotetramer.

The catalysed reaction is UTP + L-glutamine + ATP + H2O = CTP + L-glutamate + ADP + phosphate + 2 H(+). It carries out the reaction L-glutamine + H2O = L-glutamate + NH4(+). It catalyses the reaction UTP + NH4(+) + ATP = CTP + ADP + phosphate + 2 H(+). Its pathway is pyrimidine metabolism; CTP biosynthesis via de novo pathway; CTP from UDP: step 2/2. Its activity is regulated as follows. Allosterically activated by GTP, when glutamine is the substrate; GTP has no effect on the reaction when ammonia is the substrate. The allosteric effector GTP functions by stabilizing the protein conformation that binds the tetrahedral intermediate(s) formed during glutamine hydrolysis. Inhibited by the product CTP, via allosteric rather than competitive inhibition. Functionally, catalyzes the ATP-dependent amination of UTP to CTP with either L-glutamine or ammonia as the source of nitrogen. Regulates intracellular CTP levels through interactions with the four ribonucleotide triphosphates. This Streptococcus pyogenes serotype M28 (strain MGAS6180) protein is CTP synthase.